Consider the following 373-residue polypeptide: Potential protein lysine methyltransferase SET6 (373 aa).

The SET domain occupies 12–338 (PFFQVRQTKW…KDEQICIDYS (327 aa)).

It belongs to the class V-like SAM-binding methyltransferase superfamily.

Functionally, involved in resistance to compounds that target ergosterol biosynthesis, including fenpropimorph, dyclonine, and alverine citrate. Since a deletion in the absence of these compounds does not have an effect on growth, is more likely to be involved in compound availability. The sequence is that of Potential protein lysine methyltransferase SET6 (SET6) from Saccharomyces cerevisiae (strain ATCC 204508 / S288c) (Baker's yeast).